Consider the following 1265-residue polypeptide: Protein transport protein SEC31 (1265 aa).

7 WD repeats span residues 6–46, 61–105, 116–156, 162–202, 209–252, 256–296, and 299–339; these read EIAR…ELWD, TVDN…KTKD, KHTG…EPFA, TPMD…EVLH, GGRA…APEK, GHKK…KLGE, and TTAN…PSVS. Residues 380–403 form a WD 8; interaction with SEC13 repeat; the sequence is SFGFGSKLVIINTDSSGKSTVKVD. Over residues 457-480 the composition is skewed to basic and acidic residues; sequence KESLFEDANNDEKEATSPETKKEN. 3 disordered regions span residues 457–485, 765–784, and 793–1163; these read KESL…EDDF, VKSS…GQTR, and PAYA…IPEN. The span at 794–810 shows a compositional bias: pro residues; it reads AYAPPVQAPPVQAPQPP. Low complexity-rich tracts occupy residues 811 to 824, 865 to 875, 901 to 931, 939 to 951, and 969 to 987; these read LVQQ…QQQP, TPSSLSGTTSG, AKTA…FGSP, SQPG…SSAG, and SISR…TVPA. A compositionally biased stretch (polar residues) spans 1004-1023; that stretch reads SDASQPPSSGFASPTLNSSP. Composition is skewed to pro residues over residues 1062–1071 and 1083–1101; these read YAPPKNPYAV and APPP…PPQP.

Belongs to the WD repeat SEC31 family. The COPII coat is composed of at least 5 proteins: the SEC23/24 complex, the SEC13/31 complex, and the protein SAR1. SEC13 and SEC31 make a 2:2 tetramer that forms the edge element of the COPII outer coat. The tetramer self-assembles in multiple copies to form the complete polyhedral cage. Interacts (via WD 8) with SEC13.

Its subcellular location is the cytoplasmic vesicle. It is found in the COPII-coated vesicle membrane. The protein resides in the endoplasmic reticulum membrane. Functionally, component of the coat protein complex II (COPII) which promotes the formation of transport vesicles from the endoplasmic reticulum (ER). The coat has two main functions, the physical deformation of the endoplasmic reticulum membrane into vesicles and the selection of cargo molecules. This is Protein transport protein SEC31 (PGA63) from Candida albicans (strain SC5314 / ATCC MYA-2876) (Yeast).